We begin with the raw amino-acid sequence, 452 residues long: Down-regulator of invasive growth 1 (452 aa).

Disordered regions lie at residues 1 to 145 (MAVS…SAPA) and 262 to 311 (RNKR…ADLR). Polar residues-rich tracts occupy residues 12–22 (EDTSIAKSTQD) and 35–53 (KGSSDSNIKNSPGGNSVGQ). A Phosphoserine modification is found at Ser45. Over residues 61 to 77 (PEEDDSGDKEADHEDSE) the composition is skewed to acidic residues. Residues 81 to 100 (AKKRKAQPLKNPKKSLKRGR) show a composition bias toward basic residues. 4 stretches are compositionally biased toward polar residues: residues 107–116 (LSDSNTNTHG), 124–145 (LASSNSAHFPPVANQNVKSAPA), 269–281 (SYDSPLSGTASTG), and 291–307 (RNSSVGSSANAGPTQQR). Phosphoserine occurs at positions 126, 142, 272, and 275. An interaction with FUS3 and KSS1 region spans residues 212 to 452 (IPPPHMLNKP…KSSSHHRTGK (241 aa)). The residue at position 330 (Ser330) is a Phosphoserine. A compositionally biased stretch (low complexity) spans 331–348 (ANTKARSASTSTSTSTST). A disordered region spans residues 331 to 395 (ANTKARSAST…QRTSQPQQQS (65 aa)). Residues 349–361 (NRDRSSWHEAEPN) show a composition bias toward basic and acidic residues. Over residues 362–372 (KDEEEGTDLAI) the composition is skewed to acidic residues. Positions 378 to 395 (PTPTFTTFQRTSQPQQQS) are enriched in low complexity. Thr379 is modified (phosphothreonine). Phosphoserine occurs at positions 395 and 428.

In terms of assembly, forms a complex with DIG2, STE12 and either FUS3 or KSS1. The interaction of FUS3 with STE12 depends on the presence of both DIG1 and DIG2. STE12 is lost from FUS3/DIG1/DIG2 complex after pheromone treatment. DIG1 and DIG2 have also been reported to interact with CLN1 and CLN2. In terms of processing, phosphorylated by FUS3 and KSS1, in a pheromone-stimulated manner. Phosphorylation reduces the affinity for STE12.

The protein localises to the nucleus. Functionally, DIG1 and DIG2 are negative regulators of the filamentation and pheromone induced mating program. DIG1 and DIG2 inhibit the transcriptional activity of STE12 by direct protein-protein interaction. DIG1 colocalizes to promoters with STE12 and redistributes with it during induction of filamentation (by butanol) or mating (by pheromone) to program specific genes, but binding of DIG1 to STE12 is reduced by pheromone treatment. In Saccharomyces cerevisiae (strain ATCC 204508 / S288c) (Baker's yeast), this protein is Down-regulator of invasive growth 1 (DIG1).